Reading from the N-terminus, the 309-residue chain is Ribonuclease Z (309 aa).

Residues histidine 63, histidine 65, aspartate 67, histidine 68, histidine 145, aspartate 216, and histidine 274 each coordinate Zn(2+). Aspartate 67 (proton acceptor) is an active-site residue.

This sequence belongs to the RNase Z family. In terms of assembly, homodimer. The cofactor is Zn(2+).

It carries out the reaction Endonucleolytic cleavage of RNA, removing extra 3' nucleotides from tRNA precursor, generating 3' termini of tRNAs. A 3'-hydroxy group is left at the tRNA terminus and a 5'-phosphoryl group is left at the trailer molecule.. Zinc phosphodiesterase, which displays some tRNA 3'-processing endonuclease activity. Probably involved in tRNA maturation, by removing a 3'-trailer from precursor tRNA. The polypeptide is Ribonuclease Z (Streptococcus pneumoniae serotype 19F (strain G54)).